A 242-amino-acid chain; its full sequence is Octanoyltransferase (242 aa).

The BPL/LPL catalytic domain occupies 31-206; the sequence is SQTTDEIWFL…LFLKNFGYNQ (176 aa). Substrate is bound by residues 70 to 77, 137 to 139, and 150 to 152; these read RGGQVTYH, SIG, and GLA. The Acyl-thioester intermediate role is filled by C168.

The protein belongs to the LipB family.

The protein resides in the cytoplasm. The catalysed reaction is octanoyl-[ACP] + L-lysyl-[protein] = N(6)-octanoyl-L-lysyl-[protein] + holo-[ACP] + H(+). The protein operates within protein modification; protein lipoylation via endogenous pathway; protein N(6)-(lipoyl)lysine from octanoyl-[acyl-carrier-protein]: step 1/2. Functionally, catalyzes the transfer of endogenously produced octanoic acid from octanoyl-acyl-carrier-protein onto the lipoyl domains of lipoate-dependent enzymes. Lipoyl-ACP can also act as a substrate although octanoyl-ACP is likely to be the physiological substrate. This is Octanoyltransferase from Coxiella burnetii (strain Dugway 5J108-111).